The following is a 328-amino-acid chain: Interleukin-12 subunit beta (328 aa).

The signal sequence occupies residues 1-22 (MCHQQLVISWFSLVFLASPLMA). The 78-residue stretch at 29–106 (DVYVVELDWY…LSHSLLLLHK (78 aa)) folds into the Ig-like C2-type domain. Residues Cys-50 and Cys-90 are joined by a disulfide bond. N-linked (GlcNAc...) asparagine glycosylation is found at Asn-125, Asn-135, and Asn-222. Residues 237–328 (PPKNLQLKPL…WSEWASVPCS (92 aa)) form the Fibronectin type-III domain.

It belongs to the IL-12B family. In terms of assembly, heterodimer with IL12A; disulfide-linked. The heterodimer is known as interleukin IL-12. Heterodimer with IL23A; disulfide-linked. The heterodimer is known as interleukin IL-23. Also secreted as a monomer. Interacts with NBR1; this interaction promotes IL-12 secretion.

The protein resides in the secreted. Functionally, cytokine that can act as a growth factor for activated T and NK cells, enhance the lytic activity of NK/lymphokine-activated killer cells, and stimulate the production of IFN-gamma by resting PBMC. Its function is as follows. Associates with IL23A to form the IL-23 interleukin, a heterodimeric cytokine which functions in innate and adaptive immunity. IL-23 may constitute with IL-17 an acute response to infection in peripheral tissues. IL-23 binds to a heterodimeric receptor complex composed of IL12RB1 and IL23R, activates the Jak-Stat signaling cascade, stimulates memory rather than naive T-cells and promotes production of pro-inflammatory cytokines. IL-23 induces autoimmune inflammation and thus may be responsible for autoimmune inflammatory diseases and may be important for tumorigenesis. This is Interleukin-12 subunit beta (IL12B) from Macaca mulatta (Rhesus macaque).